A 582-amino-acid chain; its full sequence is MSSSLGKEKDSKEKDPKVPSAKEREKEAKASGGFGKESKEKEPKTKGKDAKDGKKDSSAAQPGVAFSVDNTIKRPNPAPGTRKKSSNAEVIKELNKCREENSMRLDLSKRSIHILPSSIKELTQLTELYLYSNKLQSLPAEVGCLVNLMTLALSENSLTSLPDSLDNLKKLRMLDLRHNKLREIPSVVYRLDSLTTLYLRFNRITTVEKDIKNLSKLSMLSIRENKIKQLPAEIGELCNLITLDVAHNQLEHLPKEIGNCTQITNLDLQHNELLDLPDTIGNLSSLSRLGLRYNRLSAIPRSLAKCSALEELNLENNNISTLPESLLSSLVKLNSLTLARNCFQLYPVGGPSQFSTIYSLNMEHNRINKIPFGIFSRAKVLSKLNMKDNQLTSLPLDFGTWTSMVELNLATNQLTKIPEDVSGLVSLEVLILSNNLLKKLPHGLGNLRKLRELDLEENKLESLPNEIAYLKDLQKLVLTNNQLTTLPRGIGHLTNLTHLGLGENLLTHLPEEIGTLENLEELYLNDNPNLHSLPFELALCSKLSIMSIENCPLSHLPPQIVAGGPSFIIQFLKMQGPYRAMV.

2 stretches are compositionally biased toward basic and acidic residues: residues 1 to 29 (MSSSLGKEKDSKEKDPKVPSAKEREKEAK) and 36 to 57 (KESKEKEPKTKGKDAKDGKKDS). A disordered region spans residues 1–88 (MSSSLGKEKD…PGTRKKSSNA (88 aa)). The short motif at 63–66 (GVAF) is the RVxF motif; important for interaction with PP1c element. 20 LRR repeats span residues 101–122 (NSMRLDLSKRSIHILPSSIKEL), 124–145 (QLTELYLYSNKLQSLPAEVGCL), 147–169 (NLMTLALSENSLTSLPDSLDNLK), 170–191 (KLRMLDLRHNKLREIPSVVYRL), 193–214 (SLTTLYLRFNRITTVEKDIKNL), 216–237 (KLSMLSIRENKIKQLPAEIGEL), 239–260 (NLITLDVAHNQLEHLPKEIGNC), 262–283 (QITNLDLQHNELLDLPDTIGNL), 285–307 (SLSRLGLRYNRLSAIPRSLAKCS), 308–329 (ALEELNLENNNISTLPESLLSS), 332–353 (KLNSLTLARNCFQLYPVGGPSQ), 356–377 (TIYSLNMEHNRINKIPFGIFSR), 380–400 (VLSKLNMKDNQLTSLPLDFGT), 403–424 (SMVELNLATNQLTKIPEDVSGL), 426–448 (SLEVLILSNNLLKKLPHGLGNLR), 449–470 (KLRELDLEENKLESLPNEIAYL), 472–494 (DLQKLVLTNNQLTTLPRGIGHLT), 495–516 (NLTHLGLGENLLTHLPEEIGTL), 518–540 (NLEELYLNDNPNLHSLPFELALC), and 542–563 (KLSIMSIENCPLSHLPPQIVAG).

Belongs to the SHOC2 family. Component of the SHOC2-MRAS-PP1c (SMP) complex consisting of SHOC2, GTP-bound M-Ras/MRAS and the catalytic subunit of protein phosphatase 1 (either PPP1CA, PPP1CB or PPP1CC). SHOC2 and PP1c preferably bind M-Ras/MRAS, but they also bind K-Ras/KRAS, N-Ras/NRAS and H-Ras/HRAS; these interactions are GTP-dependent and both SHOC2 and PP1c are required to form a stable complex. Interacts with PP1c in the absence of Ras GTPases. Interacts with M-Ras/MRAS and RAF1. Interacts with ERBIN; disrupts the interaction with RAF1 and Ras, preventing the activation of the Ras signaling pathway. Interacts with LZTR1.

The protein localises to the cytoplasm. It is found in the nucleus. Functionally, core component of the SHOC2-MRAS-PP1c (SMP) holophosphatase complex that regulates activation of the MAPK pathway. Acts as a scaffolding protein in the SMP complex. The SMP complex specifically dephosphorylates the inhibitory phosphorylation at 'Ser-259' of RAF1 kinase, 'Ser-365' of BRAF kinase and 'Ser-214' of ARAF kinase, stimulating their kinase activities. The SMP complex enhances the dephosphorylation activity and substrate specificity of PP1c. This Homo sapiens (Human) protein is Leucine-rich repeat protein SHOC-2 (SHOC2).